A 249-amino-acid polypeptide reads, in one-letter code: Probable transcriptional regulatory protein A1S_1496 (249 aa).

Belongs to the TACO1 family.

Its subcellular location is the cytoplasm. The protein is Probable transcriptional regulatory protein A1S_1496 of Acinetobacter baumannii (strain ATCC 17978 / DSM 105126 / CIP 53.77 / LMG 1025 / NCDC KC755 / 5377).